Reading from the N-terminus, the 1255-residue chain is Kinesin-related protein 7 (1255 aa).

Residues Met1–Ser26 are disordered. Positions Asn28–Ile349 constitute a Kinesin motor domain. Gly107 to Thr114 contributes to the ATP binding site. 3 stretches are compositionally biased toward low complexity: residues Asn454 to Asn491, Asn545 to Gly563, and His583 to Ser603. 6 disordered regions span residues Asn454–Phe503, Gly530–Tyr564, Asp579–Asn628, Glu661–Thr686, Glu795–Ile864, and Ile915–Lys934. Residues Val608–Asn628 are compositionally biased toward polar residues. The segment covering Gly813 to Glu834 has biased composition (acidic residues). Low complexity predominate over residues Ile915–Ser932. Residues Ile945–Leu965 traverse the membrane as a helical segment. The stretch at Asn1088–Leu1223 forms a coiled coil.

It belongs to the TRAFAC class myosin-kinesin ATPase superfamily. Kinesin family.

It localises to the nucleus membrane. Its subcellular location is the cytoplasm. The protein resides in the cytoskeleton. Functionally, microtubule-associated force-producing protein that plays a role in organelle transport. Its motor activity is directed toward the microtubule's plus end. May be involved in cell motility or cell differentiation during prestalk formation. The polypeptide is Kinesin-related protein 7 (kif7) (Dictyostelium discoideum (Social amoeba)).